Reading from the N-terminus, the 534-residue chain is Glucan endo-1,3-beta-glucosidase 12 (534 aa).

The signal sequence occupies residues 1-24 (MGQRLNLVFWIFVSILAFLNFGMA). The active-site Proton donor is the Glu-120. An N-linked (GlcNAc...) asparagine glycan is attached at Asn-127. Glu-264 (nucleophile) is an active-site residue. Residues Asn-336, Asn-357, and Asn-375 are each glycosylated (N-linked (GlcNAc...) asparagine). The tract at residues 348 to 379 (ENTTPVSPTNSTTGTSPSPSSSPIINGNSTVT) is disordered. Residues 349–377 (NTTPVSPTNSTTGTSPSPSSSPIINGNST) are compositionally biased toward low complexity. A disulfide bond links Cys-392 and Cys-455. Residues Asn-485, Asn-491, and Asn-495 are each glycosylated (N-linked (GlcNAc...) asparagine). Ser-507 carries GPI-anchor amidated serine lipidation. Positions 508 to 534 (STNEAFRQMVVAVSVLLPCFVVCSSIW) are cleaved as a propeptide — removed in mature form.

Belongs to the glycosyl hydrolase 17 family. In terms of processing, contains two additional disulfide bonds.

The protein localises to the secreted. Its subcellular location is the cell wall. It is found in the cell membrane. It catalyses the reaction Hydrolysis of (1-&gt;3)-beta-D-glucosidic linkages in (1-&gt;3)-beta-D-glucans.. This Arabidopsis thaliana (Mouse-ear cress) protein is Glucan endo-1,3-beta-glucosidase 12.